A 247-amino-acid chain; its full sequence is UDP-2,3-diacylglucosamine hydrolase (247 aa).

Mn(2+)-binding residues include Asp8, His10, Asp41, Asn79, and His114. 79 to 80 (NR) contributes to the substrate binding site. Residues Asp122, Ser160, Asp171, Arg174, and His202 each coordinate substrate. Mn(2+) is bound by residues His202 and His204.

Belongs to the LpxH family. It depends on Mn(2+) as a cofactor.

The protein localises to the cell inner membrane. It carries out the reaction UDP-2-N,3-O-bis[(3R)-3-hydroxytetradecanoyl]-alpha-D-glucosamine + H2O = 2-N,3-O-bis[(3R)-3-hydroxytetradecanoyl]-alpha-D-glucosaminyl 1-phosphate + UMP + 2 H(+). Its pathway is glycolipid biosynthesis; lipid IV(A) biosynthesis; lipid IV(A) from (3R)-3-hydroxytetradecanoyl-[acyl-carrier-protein] and UDP-N-acetyl-alpha-D-glucosamine: step 4/6. Hydrolyzes the pyrophosphate bond of UDP-2,3-diacylglucosamine to yield 2,3-diacylglucosamine 1-phosphate (lipid X) and UMP by catalyzing the attack of water at the alpha-P atom. Involved in the biosynthesis of lipid A, a phosphorylated glycolipid that anchors the lipopolysaccharide to the outer membrane of the cell. This chain is UDP-2,3-diacylglucosamine hydrolase, found in Xanthomonas axonopodis pv. citri (strain 306).